The primary structure comprises 348 residues: D-alanine--D-alanine ligase (348 aa).

One can recognise an ATP-grasp domain in the interval 132–334 (KRVLESIGIP…YPDLIEELVT (203 aa)). 162 to 217 (LARLTFPIFVKPANMGSSVGISKAQTKVELRKAIQLALTYDSRVLIEQGVVAREIE) is an ATP binding site. Residues aspartate 288, glutamate 301, and asparagine 303 each coordinate Mg(2+).

The protein belongs to the D-alanine--D-alanine ligase family. Mg(2+) is required as a cofactor. It depends on Mn(2+) as a cofactor.

The protein localises to the cytoplasm. It carries out the reaction 2 D-alanine + ATP = D-alanyl-D-alanine + ADP + phosphate + H(+). It functions in the pathway cell wall biogenesis; peptidoglycan biosynthesis. Its function is as follows. Cell wall formation. The polypeptide is D-alanine--D-alanine ligase (Streptococcus pyogenes serotype M3 (strain SSI-1)).